The sequence spans 218 residues: Small ribosomal subunit protein uS3c (218 aa).

The KH type-2 domain maps to 47–118; that stretch reads VQNNIRISSG…KLNIAITRIS (72 aa).

It belongs to the universal ribosomal protein uS3 family. As to quaternary structure, part of the 30S ribosomal subunit.

It localises to the plastid. The protein localises to the chloroplast. This chain is Small ribosomal subunit protein uS3c (rps3), found in Draba nemorosa (Woodland whitlowgrass).